Here is a 332-residue protein sequence, read N- to C-terminus: UPF0158 protein TC_0713 (332 aa).

Disordered stretches follow at residues 196–215 (ALNP…KVEA) and 291–332 (LGYD…KARS). Acidic residues predominate over residues 295 to 316 (GDGDASDFFGEEYDDDDDDDDD). Residues 320–332 (KKAAKRGRKKARS) are compositionally biased toward basic residues.

Belongs to the UPF0158 family.

The polypeptide is UPF0158 protein TC_0713 (Chlamydia muridarum (strain MoPn / Nigg)).